A 349-amino-acid chain; its full sequence is GDSL esterase/lipase At1g58725 (349 aa).

An N-terminal signal peptide occupies residues 1–19; it reads MKIQILLFALVLIFVEANA. N25 carries N-linked (GlcNAc...) asparagine glycosylation. The Nucleophile role is filled by S37. A glycan (N-linked (GlcNAc...) asparagine) is linked at N316. Residues D324 and H327 contribute to the active site.

It belongs to the 'GDSL' lipolytic enzyme family.

It localises to the secreted. The polypeptide is GDSL esterase/lipase At1g58725 (Arabidopsis thaliana (Mouse-ear cress)).